We begin with the raw amino-acid sequence, 147 residues long: Large ribosomal subunit protein bL9 (147 aa).

Belongs to the bacterial ribosomal protein bL9 family.

Functionally, binds to the 23S rRNA. The protein is Large ribosomal subunit protein bL9 of Clostridium botulinum (strain Alaska E43 / Type E3).